Consider the following 1125-residue polypeptide: Exportin-6 (1125 aa).

An N-acetylalanine modification is found at alanine 2. The Importin N-terminal domain occupies 31–97 (IEELLNNFAQ…RSCLPKLLLA (67 aa)). Serine 199 is modified (phosphoserine). A phosphothreonine mark is found at threonine 201 and threonine 204. A phosphoserine mark is found at serine 208 and serine 224.

The protein belongs to the exportin family. As to quaternary structure, found in a complex with XPO6, Ran, ACTB and PFN1. Interacts with ACTB. Interacts with ACTB in a RanGTP-dependent manner.

The protein resides in the nucleus. It is found in the cytoplasm. Functionally, mediates the nuclear export of actin and profilin-actin complexes in somatic cells. This chain is Exportin-6 (XPO6), found in Homo sapiens (Human).